Reading from the N-terminus, the 262-residue chain is 3-methyl-2-oxobutanoate hydroxymethyltransferase (262 aa).

Mg(2+)-binding residues include Asp-43 and Asp-82. 3-methyl-2-oxobutanoate-binding positions include 43-44 (DS), Asp-82, and Lys-110. Residue Glu-112 coordinates Mg(2+). Catalysis depends on Glu-179, which acts as the Proton acceptor.

The protein belongs to the PanB family. In terms of assembly, homodecamer; pentamer of dimers. The cofactor is Mg(2+).

Its subcellular location is the cytoplasm. The catalysed reaction is 3-methyl-2-oxobutanoate + (6R)-5,10-methylene-5,6,7,8-tetrahydrofolate + H2O = 2-dehydropantoate + (6S)-5,6,7,8-tetrahydrofolate. Its pathway is cofactor biosynthesis; (R)-pantothenate biosynthesis; (R)-pantoate from 3-methyl-2-oxobutanoate: step 1/2. Functionally, catalyzes the reversible reaction in which hydroxymethyl group from 5,10-methylenetetrahydrofolate is transferred onto alpha-ketoisovalerate to form ketopantoate. The sequence is that of 3-methyl-2-oxobutanoate hydroxymethyltransferase from Sodalis glossinidius (strain morsitans).